A 67-amino-acid polypeptide reads, in one-letter code: DNA-directed RNA polymerase subunit omega (67 aa).

The protein belongs to the RNA polymerase subunit omega family. The RNAP catalytic core consists of 2 alpha, 1 beta, 1 beta' and 1 omega subunit. When a sigma factor is associated with the core the holoenzyme is formed, which can initiate transcription.

The catalysed reaction is RNA(n) + a ribonucleoside 5'-triphosphate = RNA(n+1) + diphosphate. Promotes RNA polymerase assembly. Latches the N- and C-terminal regions of the beta' subunit thereby facilitating its interaction with the beta and alpha subunits. This chain is DNA-directed RNA polymerase subunit omega, found in Bordetella pertussis (strain Tohama I / ATCC BAA-589 / NCTC 13251).